The chain runs to 526 residues: MGLLQELAGHPLAQQFQELPLGQQVGIGFAVFLVLSVVLNVLNQLLFRNPNEPPMVFHWFPFVGSTITYGMDPPTFFRENRAKHGDVFTFILLGKKTTVAVGPAGNDFILNGKLKDVCAEEIYTVLTTPVFGKDVVYDCPNAKLMEQKKFMKIALTTEAFRSYVPIISSEVRDYFKRSPDFKGKSGIADIPKKMAEITIFTASHALQGSAIRSKFDESLAALYHDLDMGFTPINFMLHWAPLPWNRKRDHAQRTVAKIYMDTIKERRAKGNNESEHDMMKHLMNSTYKNGIRVPDHEVAHMMIALLMAGQHSSSSTSSWIMLRLAQYPHIMEELYQEQVKNLGADLPPLTYEDLAKLPLNQAIVKETLRLHAPIHSIMRAVKSPMPVPGTKYVIPTSHTLLAAPGVSATDSAFFPNPDEWDPHRWEADSPNFPRMASKGEDEEKIDYGYGLVSKGSASPYLPFGAGRHRCIGEHFANAQLQTIVAEVVREFKFRNVDGGHTLIDTDYASLFSRPLEPANIHWERRQ.

A helical membrane pass occupies residues 27–47 (IGFAVFLVLSVVLNVLNQLLF). Tyr123 serves as a coordination point for lanosterol. Residue Cys470 participates in heme binding.

The protein belongs to the cytochrome P450 family. Heme is required as a cofactor.

Its subcellular location is the endoplasmic reticulum membrane. The catalysed reaction is a 14alpha-methyl steroid + 3 reduced [NADPH--hemoprotein reductase] + 3 O2 = a Delta(14) steroid + formate + 3 oxidized [NADPH--hemoprotein reductase] + 4 H2O + 4 H(+). It catalyses the reaction a 14alpha-methyl steroid + reduced [NADPH--hemoprotein reductase] + O2 = a 14alpha-hydroxymethyl steroid + oxidized [NADPH--hemoprotein reductase] + H2O + H(+). It carries out the reaction a 14alpha-hydroxymethyl steroid + reduced [NADPH--hemoprotein reductase] + O2 = a 14alpha-formyl steroid + oxidized [NADPH--hemoprotein reductase] + 2 H2O + H(+). The enzyme catalyses a 14alpha-formyl steroid + reduced [NADPH--hemoprotein reductase] + O2 = a Delta(14) steroid + formate + oxidized [NADPH--hemoprotein reductase] + H2O + 2 H(+). The catalysed reaction is lanosterol + 3 reduced [NADPH--hemoprotein reductase] + 3 O2 = 4,4-dimethyl-5alpha-cholesta-8,14,24-trien-3beta-ol + formate + 3 oxidized [NADPH--hemoprotein reductase] + 4 H2O + 4 H(+). It catalyses the reaction lanosterol + reduced [NADPH--hemoprotein reductase] + O2 = 32-hydroxylanosterol + oxidized [NADPH--hemoprotein reductase] + H2O + H(+). It carries out the reaction 32-hydroxylanosterol + reduced [NADPH--hemoprotein reductase] + O2 = 32-oxolanosterol + oxidized [NADPH--hemoprotein reductase] + 2 H2O + H(+). The enzyme catalyses 32-oxolanosterol + reduced [NADPH--hemoprotein reductase] + O2 = 4,4-dimethyl-5alpha-cholesta-8,14,24-trien-3beta-ol + formate + oxidized [NADPH--hemoprotein reductase] + H2O + 2 H(+). The catalysed reaction is eburicol + 3 reduced [NADPH--hemoprotein reductase] + 3 O2 = 14-demethyleburicol + formate + 3 oxidized [NADPH--hemoprotein reductase] + 4 H2O + 4 H(+). It catalyses the reaction eburicol + reduced [NADPH--hemoprotein reductase] + O2 = 32-hydroxyeburicol + oxidized [NADPH--hemoprotein reductase] + H2O + H(+). It carries out the reaction 32-hydroxyeburicol + reduced [NADPH--hemoprotein reductase] + O2 = 32-oxoeburicol + oxidized [NADPH--hemoprotein reductase] + 2 H2O + H(+). The enzyme catalyses 32-oxoeburicol + reduced [NADPH--hemoprotein reductase] + O2 = 14-demethyleburicol + formate + oxidized [NADPH--hemoprotein reductase] + H2O + 2 H(+). It participates in steroid metabolism; ergosterol biosynthesis. Its function is as follows. Together with cyp51A and cyp51C, encodes the sterol 14alpha-demethylase that plays a critical role in the third module of ergosterol biosynthesis pathway, being ergosterol the major sterol component in fungal membranes that participates in a variety of functions. Essential for ascospore production. The third module or late pathway involves the ergosterol synthesis itself through consecutive reactions that mainly occur in the endoplasmic reticulum (ER) membrane. In filamentous fungi, during the initial step of this module, lanosterol (lanosta-8,24-dien-3beta-ol) can be metabolized to eburicol. Sterol 14alpha-demethylase catalyzes the three-step oxidative removal of the 14alpha-methyl group (C-32) of both these sterols in the form of formate, and converts eburicol and lanosterol to 14-demethyleburicol (4,4,24-trimethylergosta-8,14,24(28)-trienol) and 4,4-dimethyl-5alpha-cholesta-8,14,24-trien-3beta-ol, respectively, which are further metabolized by other enzymes in the pathway to ergosterol. Can also use substrates not intrinsic to fungi, such as 24,25-dihydrolanosterol (DHL), producing 4,4'-dimethyl-8,14-cholestadien-3-beta-ol, but at lower rates than the endogenous substrates. In Gibberella zeae (strain ATCC MYA-4620 / CBS 123657 / FGSC 9075 / NRRL 31084 / PH-1) (Wheat head blight fungus), this protein is Sterol 14-alpha demethylase CYP51A.